Here is a 292-residue protein sequence, read N- to C-terminus: MAEISAKQVMELRKKSGAGIMDAKKALVASEGDMDKAMDYLREKGIAKAAKKSDRIAAEGLTDIVVKGNTAAIVELNSETDFVAASDPFKAVLKDVANLIVDNKPADVEAALELKTANGTLNDDLIATTQKTGEKVSLRRFTIVEKNDNENFGAYLHQGGRIAALTVVEGADEATAKDVAMHVAAVNPEFLDRSEVSDERLEHERGIFKEETLNEGKPANIVDKIVEGRLNKFLSQICLADQDFVKDPDLTVEKYVDSKDGKLKSFIRYEVGEGIEKKQTNLAEEIKEQLNK.

Residues 80–83 are involved in Mg(2+) ion dislocation from EF-Tu; sequence TDFV.

It belongs to the EF-Ts family.

Its subcellular location is the cytoplasm. Associates with the EF-Tu.GDP complex and induces the exchange of GDP to GTP. It remains bound to the aminoacyl-tRNA.EF-Tu.GTP complex up to the GTP hydrolysis stage on the ribosome. The chain is Elongation factor Ts from Limosilactobacillus fermentum (strain NBRC 3956 / LMG 18251) (Lactobacillus fermentum).